The primary structure comprises 481 residues: Rho GTPase-activating protein 15 (481 aa).

A phosphoserine mark is found at S51, S111, S204, S207, and S249. The PH domain maps to 87 to 197 (MVEKEGYLQK…WFQAIKNAID (111 aa)). Positions 287 to 476 (SHLHTVCERE…FMLTEYDKIF (190 aa)) constitute a Rho-GAP domain.

Its subcellular location is the cytoplasm. It is found in the membrane. In terms of biological role, GTPase activator for the Rho-type GTPases by converting them to an inactive GDP-bound state. Has activity toward RAC1. Overexpression results in an increase in actin stress fibers and cell contraction. The polypeptide is Rho GTPase-activating protein 15 (Arhgap15) (Mus musculus (Mouse)).